The primary structure comprises 332 residues: Biotin synthase (332 aa).

A Radical SAM core domain is found at 53-282; sequence HFGKKVKLNM…TKEIRISGGR (230 aa). Residues cysteine 71, cysteine 75, and cysteine 78 each contribute to the [4Fe-4S] cluster site. Cysteine 115, cysteine 147, cysteine 207, and arginine 277 together coordinate [2Fe-2S] cluster.

Belongs to the radical SAM superfamily. Biotin synthase family. As to quaternary structure, homodimer. [4Fe-4S] cluster serves as cofactor. It depends on [2Fe-2S] cluster as a cofactor.

It catalyses the reaction (4R,5S)-dethiobiotin + (sulfur carrier)-SH + 2 reduced [2Fe-2S]-[ferredoxin] + 2 S-adenosyl-L-methionine = (sulfur carrier)-H + biotin + 2 5'-deoxyadenosine + 2 L-methionine + 2 oxidized [2Fe-2S]-[ferredoxin]. It participates in cofactor biosynthesis; biotin biosynthesis; biotin from 7,8-diaminononanoate: step 2/2. In terms of biological role, catalyzes the conversion of dethiobiotin (DTB) to biotin by the insertion of a sulfur atom into dethiobiotin via a radical-based mechanism. This Bacillus cereus (strain G9842) protein is Biotin synthase.